Reading from the N-terminus, the 326-residue chain is tRNA uridine(34) hydroxylase (326 aa).

The Rhodanese domain maps to 123–217 (ADPEVFVVDT…YLEEVPEEES (95 aa)). Cysteine 177 functions as the Cysteine persulfide intermediate in the catalytic mechanism. Residues 293–326 (AVRGEQHVGGESAKQRQQRRAEKLAKKDVQRKQA) are disordered. Residues 311–326 (RRAEKLAKKDVQRKQA) are compositionally biased toward basic and acidic residues.

It belongs to the TrhO family.

The catalysed reaction is uridine(34) in tRNA + AH2 + O2 = 5-hydroxyuridine(34) in tRNA + A + H2O. Functionally, catalyzes oxygen-dependent 5-hydroxyuridine (ho5U) modification at position 34 in tRNAs. This Vibrio campbellii (strain ATCC BAA-1116) protein is tRNA uridine(34) hydroxylase.